The sequence spans 101 residues: Small ribosomal subunit protein uS10 (101 aa).

Belongs to the universal ribosomal protein uS10 family. In terms of assembly, part of the 30S ribosomal subunit.

Functionally, involved in the binding of tRNA to the ribosomes. This Anaeromyxobacter dehalogenans (strain 2CP-C) protein is Small ribosomal subunit protein uS10.